We begin with the raw amino-acid sequence, 478 residues long: MSQKFDVVVIGAGPGGYVAAIRAAQLGLKTACIEKYIGKEGKVALGGTCLNVGCIPSKALLDSSYKYHEAKEAFKVHGIEAKGVTIDVPAMVARKANIVKNLTGGIATLFKANGVTSFEGHGKLLANKQVEVTGLDGKTQVLEAENVIIASGSRPVEIPPAPLSDDIIVDSTGALEFQAVPKKLGVIGAGVIGLELGSVWARLGAEVTVLEALDKFLPAADEQIAKEALKVLTKQGLNIRLGARVTASEVKKKQVTVTFTDANGEQKETFDKLIVAVGRRPVTTDLLAADSGVTLDERGFIYVDDHCKTSVPGVFAIGDVVRGAMLAHKASEEGVMVAERIAGHKAQMNYDLIPSVIYTHPEIAWVGKTEQTLKAEGVEVNVGTFPFAASGRAMAANDTTGLVKVIADAKTDRVLGVHVIGPSAAELVQQGAIGMEFGTSAEDLGMMVFSHPTLSEALHEAALAVNGHAIHIANRKKR.

FAD contacts are provided by residues glutamate 34–cysteine 49, lysine 58, and glycine 122. Cysteines 49 and 54 form a disulfide. NAD(+)-binding positions include glycine 188–isoleucine 192, glutamate 211, valine 245, and alanine 276–arginine 279. 2 residues coordinate FAD: aspartate 319 and alanine 327. Histidine 451 functions as the Proton acceptor in the catalytic mechanism.

It belongs to the class-I pyridine nucleotide-disulfide oxidoreductase family. Homodimer. FAD is required as a cofactor.

The protein resides in the cytoplasm. The catalysed reaction is N(6)-[(R)-dihydrolipoyl]-L-lysyl-[protein] + NAD(+) = N(6)-[(R)-lipoyl]-L-lysyl-[protein] + NADH + H(+). Functionally, the branched-chain alpha-keto dehydrogenase complex catalyzes the overall conversion of alpha-keto acids to acyl-CoA and CO(2). It contains multiple copies of 3 enzymatic components: branched-chain alpha-keto acid decarboxylase (E1), lipoamide acyltransferase (E2) and lipoamide dehydrogenase (E3). In Pseudomonas fluorescens, this protein is Dihydrolipoyl dehydrogenase (lpd).